A 542-amino-acid chain; its full sequence is MSIFVENQLLALVAIMGIGLLLGRIRFFGFRLGVAAVLFVGLAFSTIEPDITVPPLIYVVGLALFVYTIGLEAGRDFFRSLRSTGLRNNGLALGAIIATTAIAWVVIKALGLAPATGAGMLTGALTNTPAMAAVVDALPALIDDNPTDAARILELPVVAYSLTYPLGVLVVILTIAVCGGLFKVNHEKEAKNAGVAVQELTGRRVRVTRDDLPAISNIPELLDLEVIVSRVERRGQHDQFIPEEGDRTRLGDILTVVGSDDELERAVGLLGEFVDGHPYSDIDLDYRRIFVSDESMVGVPLAKLRNRIPGMLITRIRRGDTDLIAHPDMTLQLGDLVRVVAPAERIKEATHIFGDSYKRLADFNLVPLVVGLSLGVLVGMMEFPLPGGSALSLGNAGGPLLIALLLGAMGRTGKVVWQIPYSANLALRQLGITMFLAAIGTTAGAGFRSALSDPASLLIIGVGALLTLVISVLVLVIGHKVMRIPFGETAGILAGTQTHPAVLSYISEASRNELPAMGYTSVYPLAMVAKIIAAQVLLFLLI.

A run of 5 helical transmembrane segments spans residues 4–23 (FVENQLLALVAIMGIGLLLG), 28–47 (FGFRLGVAAVLFVGLAFSTI), 51–70 (ITVPPLIYVVGLALFVYTIG), 91–113 (LALGAIIATTAIAWVVIKALGLA), and 160–182 (YSLTYPLGVLVVILTIAVCGGLF). RCK C-terminal domains are found at residues 190–272 (AKNA…LLGE) and 274–355 (VDGH…IFGD). Transmembrane regions (helical) follow at residues 363 to 385 (FNLVPLVVGLSLGVLVGMMEFPL), 390 to 412 (ALSLGNAGGPLLIALLLGAMGRT), 425 to 447 (LALRQLGITMFLAAIGTTAGAGF), 457 to 479 (LLIIGVGALLTLVISVLVLVIGH), and 519 to 541 (YTSVYPLAMVAKIIAAQVLLFLL).

The protein belongs to the AAE transporter (TC 2.A.81) family.

The protein resides in the cell membrane. This is an uncharacterized protein from Corynebacterium efficiens (strain DSM 44549 / YS-314 / AJ 12310 / JCM 11189 / NBRC 100395).